The chain runs to 395 residues: Argininosuccinate synthase (395 aa).

7 to 15 provides a ligand contact to ATP; the sequence is LYSGGLDTS. Y83 is an L-citrulline binding site. Residue G113 coordinates ATP. Residues T115, N119, and D120 each contribute to the L-aspartate site. L-citrulline is bound at residue N119. R123, S169, S178, E253, and Y265 together coordinate L-citrulline.

This sequence belongs to the argininosuccinate synthase family. Type 1 subfamily. Homotetramer.

The protein resides in the cytoplasm. The catalysed reaction is L-citrulline + L-aspartate + ATP = 2-(N(omega)-L-arginino)succinate + AMP + diphosphate + H(+). The protein operates within amino-acid biosynthesis; L-arginine biosynthesis; L-arginine from L-ornithine and carbamoyl phosphate: step 2/3. This chain is Argininosuccinate synthase, found in Picrophilus torridus (strain ATCC 700027 / DSM 9790 / JCM 10055 / NBRC 100828 / KAW 2/3).